An 8545-amino-acid chain; its full sequence is Nuclear anchorage protein 1 (8545 aa).

The actin-binding stretch occupies residues 1–325; it reads MSSSPPARPC…VITYVSQFVR (325 aa). The Cytoplasmic portion of the chain corresponds to 1 to 8494; sequence MSSSPPARPC…QRSRWRRVLR (8494 aa). Residues 23–130 enclose the Calponin-homology (CH) 1 domain; that stretch reads KAQKNTFTRW…LIWQIILHFQ (108 aa). Residues 148–197 are disordered; it reads TEEPTSSAQPEVVVTAPSPTPSSKKSHSKVSSLSGSKTSLASGEKAPSSP. A compositionally biased stretch (low complexity) spans 159–190; it reads VVVTAPSPTPSSKKSHSKVSSLSGSKTSLASG. One can recognise a Calponin-homology (CH) 2 domain in the interval 222–328; that stretch reads QSVEQVFLRW…YVSQFVRMFG (107 aa). 19 coiled-coil regions span residues 754–774, 1072–1101, 1215–1236, 1324–1384, 1574–1629, 1725–1754, 1950–1981, 2103–2580, 2682–2712, 2852–2949, 3002–3119, 3178–3295, 3346–3417, 3482–3552, 3587–3703, 3781–3839, 3902–4022, 4114–4198, and 4249–4320; these read NIRD…NHSR, SFFQ…LMVH, ADIL…EIQA, DTKK…QFED, RSIE…DLVK, ENRN…YEDA, PAII…NYNQ, DNIE…KKSD, SVKE…KIAK, IMQE…NIGK, DQIV…KTVV, DDEK…DEFK, QLQH…PEND, DELI…EKSL, KAEE…ELLD, ALKA…KEQL, AAHD…KTVV, and LDVA…DEFK. Residues 3010-3019 show a composition bias toward basic and acidic residues; sequence EAEDVTAKES. The interval 3010–3033 is disordered; the sequence is EAEDVTAKESAKKKKKDKKKSPQE. 6 tandem repeats follow at residues 3241-4143, 4144-5097, 5098-6000, 6001-6903, 6904-7806, and 7807-8199. The interval 3241 to 8199 is 6 X tandem repeat; that stretch reads QVAKDIKDSK…TLIPDLEERA (4959 aa). Basic and acidic residues predominate over residues 3913–3922; that stretch reads EAEDVTAKES. The tract at residues 3913–3936 is disordered; that stretch reads EAEDVTAKESAKKKKKDKKKSPQE. A compositionally biased stretch (basic and acidic residues) spans 4372 to 4393; the sequence is ITREDGGDDNKSPDELIDDRGR. The tract at residues 4372 to 4395 is disordered; that stretch reads ITREDGGDDNKSPDELIDDRGRST. Coiled-coil stretches lie at residues 4436–4506, 4541–4657, 4735–4793, 4856–4976, 5035–5152, 5203–5274, 5339–5409, 5444–5560, 5638–5696, 5759–5879, 5938–6055, 6106–6177, 6242–6312, 6347–6463, 6541–6599, 6662–6782, 6841–6958, 7009–7080, 7145–7215, 7250–7366, 7444–7502, 7565–7685, 7744–7861, 7912–7983, 8048–8118, 8153–8204, 8273–8329, and 8370–8390; these read DELI…EKSL, KAEE…ELLD, ALKA…KEQL, AAHD…KTVV, DDEK…DEFK, QLQH…PEND, KAEE…IWER, VAED…DINN, and STSI…KEIE. The segment covering 4867–4876 has biased composition (basic and acidic residues); sequence EAEDVTAKES. Residues 4867 to 4890 form a disordered region; sequence EAEDVTAKESAKKKKKDKKKSPQE. Residues 5770–5779 show a composition bias toward basic and acidic residues; it reads EAEDVTAKES. A disordered region spans residues 5770–5793; it reads EAEDVTAKESAKKKKKDKKKSPQE. The span at 6673–6682 shows a compositional bias: basic and acidic residues; sequence EAEDVTAKES. A disordered region spans residues 6673-6696; sequence EAEDVTAKESAKKKKKDKKKSPQE. Residues 7576 to 7585 are compositionally biased toward basic and acidic residues; sequence EAEDVTAKES. The disordered stretch occupies residues 7576–7599; the sequence is EAEDVTAKESAKKKKKDKKKSPQE. Disordered stretches follow at residues 8391–8418 and 8449–8480; these read PRLQ…KPYD and SDSE…LSEE. Residues 8401-8411 are compositionally biased toward acidic residues; the sequence is DNEDDEDEEKG. A compositionally biased stretch (basic and acidic residues) spans 8451–8464; that stretch reads SESRSEFDSLDSRS. The KASH domain occupies 8486-8545; the sequence is RSRWRRVLRTALPLQALLVLLMGAACLVPHCDDEYCCQLLNNFAKSFDPSLEFVNGPPPF. Residues 8495–8513 traverse the membrane as a helical; Anchor for type IV membrane protein segment; sequence TALPLQALLVLLMGAACLV. At 8514-8545 the chain is on the perinuclear space side; it reads PHCDDEYCCQLLNNFAKSFDPSLEFVNGPPPF.

It belongs to the nesprin family. As to quaternary structure, interacts with F-actin via its N-terminal domain. Most likely interacts with unc-84; the interaction is probably required to recruit anc-1 to the nuclear envelope. As to expression, ubiquitously expressed in all postembryonic cells.

The protein localises to the nucleus outer membrane. It localises to the cytoplasm. The protein resides in the cytoskeleton. In terms of biological role, plays a central role in nuclear and mitochondrial anchoring. Probably connects nuclei to the cytoskeleton by interacting with unc-84 at the nuclear envelope and with F-actin in the cytoplasm, creating a bridge across the nuclear envelope between the cytoskeleton and the nucleus. Has a role in positioning of the cell body of the PVQ lumbar interneuron. This is Nuclear anchorage protein 1 from Caenorhabditis elegans.